A 60-amino-acid chain; its full sequence is MAVQQNKKTPSKRGMHRSHDFLVAPQLSVEPTTGETHMRHHISPNGFYRGRKVLKTKNDE.

Positions 1 to 60 (MAVQQNKKTPSKRGMHRSHDFLVAPQLSVEPTTGETHMRHHISPNGFYRGRKVLKTKNDE) are disordered. The span at 49 to 60 (RGRKVLKTKNDE) shows a compositional bias: basic residues.

It belongs to the bacterial ribosomal protein bL32 family.

The sequence is that of Large ribosomal subunit protein bL32 from Janthinobacterium sp. (strain Marseille) (Minibacterium massiliensis).